A 201-amino-acid chain; its full sequence is Bradykinin potentiating and C-type natriuretic peptides (201 aa).

The first 23 residues, 1–23 (MFVSRLAASGLLLLALLAVSLDG), serve as a signal peptide directing secretion. Residues 24-47 (KPVQQWSQNWPGPKVPPLVVQQWS) constitute a propeptide that is removed on maturation. Gln-48 bears the Pyrrolidone carboxylic acid mark. A propeptide spanning residues 58–60 (LVV) is cleaved from the precursor. A Pyrrolidone carboxylic acid modification is found at Gln-61. 2 consecutive propeptides follow at residues 67–95 (TQLQ…AALD) and 107–179 (GSKA…LAKK). The interval 90–172 (PDAALDTPPA…GGGGGGGARR (83 aa)) is disordered. Residues 120-130 (SKGASATSTAS) show a composition bias toward low complexity. Positions 132 to 142 (PMRDLRTDGKQ) are enriched in basic and acidic residues. Over residues 159–170 (PGGGGGGGGGGA) the composition is skewed to gly residues. Cys-185 and Cys-201 form a disulfide bridge.

It in the N-terminal section; belongs to the bradykinin-potentiating peptide family. The protein in the central section; belongs to the bradykinin inhibitor peptide family. This sequence in the C-terminal section; belongs to the natriuretic peptide family. As to expression, venom gland.

It is found in the secreted. Inhibits the activity of the angiotensin-converting enzyme (ACE) by a preferential interaction with its C-domain. May also potentiate the hypotensive effects of bradykinin. Functionally, antagonizes the vasodilatory actions of bradykinin at the B2 bradykinin receptor. Its function is as follows. has a vasorelaxant activity in rat aortic strips and a diuretic potency in anesthetized rats. May act by activating natriuretic receptors (NPR1 and/or NPR2). This Sistrurus catenatus edwardsii (Desert massasauga) protein is Bradykinin potentiating and C-type natriuretic peptides.